We begin with the raw amino-acid sequence, 199 residues long: Recombination protein RecR (199 aa).

The C4-type zinc finger occupies 58–73; it reads CARCGNITSADLCDIC. The Toprim domain occupies 81-176; that stretch reads GELCVVEDVA…QVTSLAQGVP (96 aa).

This sequence belongs to the RecR family.

In terms of biological role, may play a role in DNA repair. It seems to be involved in an RecBC-independent recombinational process of DNA repair. It may act with RecF and RecO. This chain is Recombination protein RecR, found in Cereibacter sphaeroides (strain ATCC 17025 / ATH 2.4.3) (Rhodobacter sphaeroides).